Consider the following 299-residue polypeptide: Oxygen-dependent coproporphyrinogen-III oxidase (299 aa).

Residue Ser-92 participates in substrate binding. His-96 and His-106 together coordinate Mn(2+). His-106 serves as the catalytic Proton donor. 108–110 is a binding site for substrate; it reads NVR. Mn(2+)-binding residues include His-145 and His-175. The interval 240–275 is important for dimerization; that stretch reads YVEFNLVWDRGTLFGLQTGGRTESILMSMPPLVRWE. A substrate-binding site is contributed by 258 to 260; the sequence is GGR.

This sequence belongs to the aerobic coproporphyrinogen-III oxidase family. In terms of assembly, homodimer. Mn(2+) serves as cofactor.

Its subcellular location is the cytoplasm. It carries out the reaction coproporphyrinogen III + O2 + 2 H(+) = protoporphyrinogen IX + 2 CO2 + 2 H2O. The protein operates within porphyrin-containing compound metabolism; protoporphyrin-IX biosynthesis; protoporphyrinogen-IX from coproporphyrinogen-III (O2 route): step 1/1. In terms of biological role, involved in the heme biosynthesis. Catalyzes the aerobic oxidative decarboxylation of propionate groups of rings A and B of coproporphyrinogen-III to yield the vinyl groups in protoporphyrinogen-IX. The protein is Oxygen-dependent coproporphyrinogen-III oxidase of Escherichia fergusonii (strain ATCC 35469 / DSM 13698 / CCUG 18766 / IAM 14443 / JCM 21226 / LMG 7866 / NBRC 102419 / NCTC 12128 / CDC 0568-73).